The following is a 72-amino-acid chain: Translation initiation factor IF-1 (72 aa).

Residues 1–72 (MAKDDVIEVE…TRGRITYRYK (72 aa)) enclose the S1-like domain. Y60 bears the Phosphotyrosine mark.

This sequence belongs to the IF-1 family. Component of the 30S ribosomal translation pre-initiation complex which assembles on the 30S ribosome in the order IF-2 and IF-3, IF-1 and N-formylmethionyl-tRNA(fMet); mRNA recruitment can occur at any time during PIC assembly.

The protein localises to the cytoplasm. One of the essential components for the initiation of protein synthesis. Stabilizes the binding of IF-2 and IF-3 on the 30S subunit to which N-formylmethionyl-tRNA(fMet) subsequently binds. Helps modulate mRNA selection, yielding the 30S pre-initiation complex (PIC). Upon addition of the 50S ribosomal subunit IF-1, IF-2 and IF-3 are released leaving the mature 70S translation initiation complex. This chain is Translation initiation factor IF-1, found in Oceanobacillus iheyensis (strain DSM 14371 / CIP 107618 / JCM 11309 / KCTC 3954 / HTE831).